The following is a 143-amino-acid chain: Transcriptional regulator MraZ (143 aa).

2 SpoVT-AbrB domains span residues 5-47 (EFQH…TLTE) and 76-119 (AVEV…DRKL).

This sequence belongs to the MraZ family. In terms of assembly, forms oligomers.

It is found in the cytoplasm. The protein resides in the nucleoid. In Macrococcus caseolyticus (strain JCSC5402) (Macrococcoides caseolyticum), this protein is Transcriptional regulator MraZ.